Here is a 437-residue protein sequence, read N- to C-terminus: Enolase (437 aa).

Gln162 provides a ligand contact to (2R)-2-phosphoglycerate. Glu204 serves as the catalytic Proton donor. Mg(2+) contacts are provided by Asp251, Glu297, and Asp324. (2R)-2-phosphoglycerate-binding residues include Lys349, Arg378, Ser379, and Lys400. Residue Lys349 is the Proton acceptor of the active site.

Belongs to the enolase family. Requires Mg(2+) as cofactor.

The protein localises to the cytoplasm. The protein resides in the secreted. It localises to the cell surface. The enzyme catalyses (2R)-2-phosphoglycerate = phosphoenolpyruvate + H2O. Its pathway is carbohydrate degradation; glycolysis; pyruvate from D-glyceraldehyde 3-phosphate: step 4/5. Catalyzes the reversible conversion of 2-phosphoglycerate (2-PG) into phosphoenolpyruvate (PEP). It is essential for the degradation of carbohydrates via glycolysis. In Chlorobium chlorochromatii (strain CaD3), this protein is Enolase.